The sequence spans 322 residues: tRNA U34 carboxymethyltransferase (322 aa).

Carboxy-S-adenosyl-L-methionine-binding residues include K91, W105, K110, G129, M195, Y199, and R314.

The protein belongs to the class I-like SAM-binding methyltransferase superfamily. CmoB family. As to quaternary structure, homotetramer.

The enzyme catalyses carboxy-S-adenosyl-L-methionine + 5-hydroxyuridine(34) in tRNA = 5-carboxymethoxyuridine(34) in tRNA + S-adenosyl-L-homocysteine + H(+). Catalyzes carboxymethyl transfer from carboxy-S-adenosyl-L-methionine (Cx-SAM) to 5-hydroxyuridine (ho5U) to form 5-carboxymethoxyuridine (cmo5U) at position 34 in tRNAs. The chain is tRNA U34 carboxymethyltransferase from Ectopseudomonas mendocina (strain ymp) (Pseudomonas mendocina).